The following is a 510-amino-acid chain: Propionyl-CoA carboxylase beta chain (510 aa).

In terms of domain architecture, CoA carboxyltransferase N-terminal spans 1–257 (MKDILEQLED…NNREKPPVRP (257 aa)). The interval 1 to 504 (MKDILEQLED…NKSVQMPWKK (504 aa)) is carboxyltransferase. Residues 261-504 (DPDRIEPSLD…NKSVQMPWKK (244 aa)) form the CoA carboxyltransferase C-terminal domain. The segment at 292–325 (DEGDFYEIQEEFAKNIITGFIRLEGRTVGVVANQ) is acyl-CoA binding.

This sequence belongs to the AccD/PCCB family. The holoenzyme is a dodecamer composed of 6 PccA/alpha subunits and 6 PccB/beta subunits.

It catalyses the reaction propanoyl-CoA + hydrogencarbonate + ATP = (S)-methylmalonyl-CoA + ADP + phosphate + H(+). It functions in the pathway metabolic intermediate metabolism; propanoyl-CoA degradation; succinyl-CoA from propanoyl-CoA: step 1/3. This is one of the 2 subunits of the biotin-dependent propionyl-CoA carboxylase (PCC), the enzyme catalyzing the carboxylation of propionyl-CoA/propanoyl-CoA to D-methylmalonyl-CoA/(S)-methylmalonyl-CoA. Within the holoenzyme, the alpha subunit catalyzes the ATP-dependent carboxylation of the biotin carried by the biotin carboxyl carrier (BCC) domain, while the beta subunit then tranfers the carboxyl group from carboxylated biotin to propionyl-CoA. This chain is Propionyl-CoA carboxylase beta chain, found in Roseobacter denitrificans (strain ATCC 33942 / OCh 114) (Erythrobacter sp. (strain OCh 114)).